A 342-amino-acid polypeptide reads, in one-letter code: Trans-3-hydroxy-L-proline dehydratase (342 aa).

The active-site Proton acceptor is Ser-90. Substrate is bound by residues 91–92, Asp-251, and 256–257; these read GS and GT.

The protein belongs to the proline racemase family.

It carries out the reaction trans-3-hydroxy-L-proline = 1-pyrroline-2-carboxylate + H2O. Catalyzes the dehydration of trans-3-hydroxy-L-proline (t3LHyp) to Delta(1)-pyrroline-2-carboxylate (Pyr2C). Displays neither proline racemase activity nor 4-hydroxyproline 2-epimerase activity. The protein is Trans-3-hydroxy-L-proline dehydratase of Brucella suis biovar 1 (strain 1330).